The following is a 1067-amino-acid chain: TBC1 domain family member 31 (1067 aa).

6 WD repeats span residues 36-75, 76-119, 120-161, 162-201, 202-249, and 250-288; these read GKVV…FRLV, LKTG…SWMR, GHEG…KLNI, RQSV…CKYQ, LPLP…RVIQ, and MPSQ…RFIN. A Rab-GAP TBC domain is found at 419 to 594; that stretch reads EYPAKYRMFV…RLFDNIFSNH (176 aa). A coiled-coil region spans residues 724–773; sequence QQELLQKAEEQRKHVLEQEEEKLTQQRAKLAAMKRELKVKELQLLDATRR. Composition is skewed to basic and acidic residues over residues 896 to 912 and 926 to 937; these read KADA…EELQ and MREEAHRKKDEA. Disordered regions lie at residues 896–955 and 1045–1067; these read KADA…HSDG and AARA…PVSP. Composition is skewed to polar residues over residues 941-953 and 1052-1067; these read IQES…STHS and SSAS…PVSP.

The protein resides in the cytoplasm. Its subcellular location is the cytoskeleton. The protein localises to the microtubule organizing center. It localises to the centrosome. It is found in the centriolar satellite. The protein resides in the cilium basal body. Its function is as follows. Molecular adapter which is involved in cilium biogenesis. Part of a functional complex including OFD1 a centriolar protein involved in cilium assembly. Could regulate the cAMP-dependent phosphorylation of OFD1, and its subsequent ubiquitination by PJA2 which ultimately leads to its proteasomal degradation. The sequence is that of TBC1 domain family member 31 from Oryzias latipes (Japanese rice fish).